A 589-amino-acid polypeptide reads, in one-letter code: Nicotinate phosphoribosyltransferase (589 aa).

Positions 1–30 are disordered; the sequence is MSQSNTPLKRKKTENGYSENGSTTGATSNQ. A compositionally biased stretch (polar residues) spans 15-30; the sequence is NGYSENGSTTGATSNQ. Tyrosine 68 and threonine 256 together coordinate nicotinate. Histidine 259 bears the Phosphohistidine mark. Arginine 356 contributes to the nicotinate binding site. Threonine 418 lines the 5-phospho-alpha-D-ribose 1-diphosphate pocket.

The protein belongs to the NAPRTase family. Mg(2+) serves as cofactor. It depends on Mn(2+) as a cofactor. Post-translationally, transiently phosphorylated on a His residue during the reaction cycle. Phosphorylation strongly increases the affinity for substrates and increases the rate of nicotinate D-ribonucleotide production. Dephosphorylation regenerates the low-affinity form of the enzyme, leading to product release.

It carries out the reaction nicotinate + 5-phospho-alpha-D-ribose 1-diphosphate + ATP + H2O = nicotinate beta-D-ribonucleotide + ADP + phosphate + diphosphate. It functions in the pathway cofactor biosynthesis; NAD(+) biosynthesis; nicotinate D-ribonucleotide from nicotinate: step 1/1. In terms of biological role, catalyzes the first step in the biosynthesis of NAD from nicotinic acid, the ATP-dependent synthesis of beta-nicotinate D-ribonucleotide from nicotinate and 5-phospho-D-ribose 1-phosphate. Helps prevent cellular oxidative stress via its role in NAD biosynthesis. The polypeptide is Nicotinate phosphoribosyltransferase (naprt) (Dictyostelium discoideum (Social amoeba)).